We begin with the raw amino-acid sequence, 359 residues long: Protein mab-21-like 2 (359 aa).

The protein belongs to the mab-21 family. In terms of tissue distribution, expressed in the adult cerebellum and eye, with lower levels in the adult forebrain. In embryos at 10.5 days post-coitum strongly expressed in the rostral and distal regions of the developing neural retina, with no expression immediately adjacent to the closing optic fissure. Expression is also observed in the dorsal and ventral aspects of the developing forelimb bud and in the developing pharyngeal arches, as well as in the midbrain.

It is found in the nucleus. The protein localises to the cytoplasm. Its function is as follows. Required for several aspects of embryonic development including normal development of the eye, notochord, neural tube and other organ tissues, and for embryonic turning. The sequence is that of Protein mab-21-like 2 (Mab21l2) from Mus musculus (Mouse).